We begin with the raw amino-acid sequence, 330 residues long: Ferredoxin--NADP reductase (330 aa).

7 residues coordinate FAD: Glu-34, Gln-42, Tyr-47, Val-87, Phe-121, Asp-285, and Ser-325.

This sequence belongs to the ferredoxin--NADP reductase type 2 family. In terms of assembly, homodimer. It depends on FAD as a cofactor.

The enzyme catalyses 2 reduced [2Fe-2S]-[ferredoxin] + NADP(+) + H(+) = 2 oxidized [2Fe-2S]-[ferredoxin] + NADPH. The sequence is that of Ferredoxin--NADP reductase from Limosilactobacillus fermentum (strain NBRC 3956 / LMG 18251) (Lactobacillus fermentum).